The following is a 204-amino-acid chain: Urease accessory protein UreG (204 aa).

Glycine 11 to threonine 18 serves as a coordination point for GTP.

This sequence belongs to the SIMIBI class G3E GTPase family. UreG subfamily. Homodimer. UreD, UreF and UreG form a complex that acts as a GTP-hydrolysis-dependent molecular chaperone, activating the urease apoprotein by helping to assemble the nickel containing metallocenter of UreC. The UreE protein probably delivers the nickel.

Its subcellular location is the cytoplasm. Facilitates the functional incorporation of the urease nickel metallocenter. This process requires GTP hydrolysis, probably effectuated by UreG. The protein is Urease accessory protein UreG of Staphylococcus aureus (strain bovine RF122 / ET3-1).